The primary structure comprises 266 residues: MQIFKPASGHTHSTVQKSVVNKLNFYYGGYQALKNIDMMVYEKQVTALIGPSGCGKSTFLRCFNRMHDLYPRNHYEGEIILHPDNANILSPEVDPIEVRMRISMVFQKPNPFPKSIFENVAYGLRIRGVKRRSILEERVENALRNAALWEEVKDRLGDLAFNLSGGQQQRLCIARALATDPEILLFDEPTSALDPIATASIEELISDLRNKVTILIVTHNMQQAARVSDYTAYMYMGELIEFGATDTIFIKPKNKQTEDYITGRFG.

An ABC transporter domain is found at 15–261 (VQKSVVNKLN…PKNKQTEDYI (247 aa)). 50-57 (GPSGCGKS) contacts ATP.

Belongs to the ABC transporter superfamily. Phosphate importer (TC 3.A.1.7) family. As to quaternary structure, the complex is composed of two ATP-binding proteins (PstB), two transmembrane proteins (PstC and PstA) and a solute-binding protein (PstS).

Its subcellular location is the cell inner membrane. The catalysed reaction is phosphate(out) + ATP + H2O = ADP + 2 phosphate(in) + H(+). Part of the ABC transporter complex PstSACB involved in phosphate import. Responsible for energy coupling to the transport system. This chain is Phosphate import ATP-binding protein PstB, found in Nitrosomonas europaea (strain ATCC 19718 / CIP 103999 / KCTC 2705 / NBRC 14298).